A 302-amino-acid polypeptide reads, in one-letter code: Aliphatic sulfonates import ATP-binding protein SsuB (302 aa).

The span at 30–57 (PATADAQHTADAQHTADAQHTADAQHTA) shows a compositional bias: low complexity. The interval 30-65 (PATADAQHTADAQHTADAQHTADAQHTAETAETRGA) is disordered. The ABC transporter domain occupies 70–284 (IRIRGLRRTF…RRTDPAFDRL (215 aa)). 102–109 (GRSGSGKS) is an ATP binding site.

Belongs to the ABC transporter superfamily. Aliphatic sulfonates importer (TC 3.A.1.17.2) family. In terms of assembly, the complex is composed of two ATP-binding proteins (SsuB), two transmembrane proteins (SsuC) and a solute-binding protein (SsuA).

The protein localises to the cell membrane. The enzyme catalyses ATP + H2O + aliphatic sulfonate-[sulfonate-binding protein]Side 1 = ADP + phosphate + aliphatic sulfonateSide 2 + [sulfonate-binding protein]Side 1.. Functionally, part of the ABC transporter complex SsuABC involved in aliphatic sulfonates import. Responsible for energy coupling to the transport system. In Frankia casuarinae (strain DSM 45818 / CECT 9043 / HFP020203 / CcI3), this protein is Aliphatic sulfonates import ATP-binding protein SsuB.